The chain runs to 92 residues: WPAYPGPNGIRSSVCQTKLGCGKKNLATKGVCKAFCLGRKRFWQKCGKNGSSGKGSKICNAVLAHAVEKAGKGLIKVTDMAVAAIIKYAGKK.

3 disulfide bridges follow: Cys-15–Cys-36, Cys-21–Cys-32, and Cys-46–Cys-59.

It belongs to the worm cytolysin family. In terms of tissue distribution, localized within the skin and proboscis and are most readily isolated from body mucus secretions.

It localises to the secreted. Functionally, cytolysin that shows hemolytic activity (on bovine erythrocytes, HC(50)=5.75 mg/ml). This hemolytic activity is completely inhibited by small unilamelar vesicles composed of PC/PG, PC/PI and PC/PS in 1:1 molar ratios (with at least 100 mg/ml concentration). The sequence is that of Parbolysin P7 from Parborlasia corrugatus (Antarctic nemertean worm).